Reading from the N-terminus, the 201-residue chain is Glycerol-3-phosphate acyltransferase (201 aa).

The next 6 helical transmembrane spans lie at 3–23 (TVLFALGAYLIGSISFAVVVS), 51–71 (KAAILTLLGDGAKGFLAVWLV), 85–105 (VALVAIAVFLGHLWPVFFRFV), 116–136 (VLLALNGWLGLATLVTWLVIA), 137–157 (YAFRYSSLAALIAAIFAPFYY), and 158–178 (GLLFGPDVILLAVLAMSILLV).

Belongs to the PlsY family. In terms of assembly, probably interacts with PlsX.

The protein localises to the cell inner membrane. The enzyme catalyses an acyl phosphate + sn-glycerol 3-phosphate = a 1-acyl-sn-glycero-3-phosphate + phosphate. The protein operates within lipid metabolism; phospholipid metabolism. In terms of biological role, catalyzes the transfer of an acyl group from acyl-phosphate (acyl-PO(4)) to glycerol-3-phosphate (G3P) to form lysophosphatidic acid (LPA). This enzyme utilizes acyl-phosphate as fatty acyl donor, but not acyl-CoA or acyl-ACP. This chain is Glycerol-3-phosphate acyltransferase, found in Janthinobacterium sp. (strain Marseille) (Minibacterium massiliensis).